The primary structure comprises 523 residues: MNSSTSAGVYANGNDNKKFKGDRPPCSPSRVLHLRKIPCDVTEAEVISLGLPFGKVTNLLMLKGKSQAFLEMASEEAAVTMINYYTPVTPHLRSQPVYIQYSNHRELKTDNLPNQARAQAALQAVSAVQSGNLSLPGATANEGTLLPGQSPVLRIIIENLFYPVTLEVLHQIFSKFGTVLKIITFTKNNQFQALLQYADPVNAQYAKMALDGQNIYNACCTLRIDFSKLTSLNVKYNNDKSRDFTRLDLPTGDGQPSLEPPMAAAFGAPGIMSSPYAGAAGFAPAIAFPQAAGLSVPAVPGALGPLTLTSSAVSGRMAIPGASGMPGNSVLLVTNLNPDFITPHGLFILFGVYGDVHRVKIMFNKKENALVQMADASQAQLAMNHLSGQRLYGKVLRATLSKHQAVQLPREGQEDQGLTKDFSNSPLHRFKKPGSKNFQNIFPPSATLHLSNIPPSVTMDDLKNLFTEAGCSVKAFKFFQKDRKMALIQLGSVEEAIQALIELHNHDLGENHHLRVSFSKSTI.

The interval 1-25 (MNSSTSAGVYANGNDNKKFKGDRPP) is disordered. RRM domains lie at 30–114 (RVLH…NLPN), 153–229 (LRII…FSKL), and 329–403 (SVLL…LSKH). Lysine 36 participates in a covalent cross-link: Glycyl lysine isopeptide (Lys-Gly) (interchain with G-Cter in SUMO2). Tyrosine 98 is modified (phosphotyrosine). The residue at position 109 (threonine 109) is a Phosphothreonine. A Glycyl lysine isopeptide (Lys-Gly) (interchain with G-Cter in SUMO2) cross-link involves residue lysine 187. At lysine 394 the chain carries N6-acetyllysine. The tract at residues 406 to 426 (VQLPREGQEDQGLTKDFSNSP) is disordered. The residue at position 425 (serine 425) is a Phosphoserine. The RRM 4 domain maps to 446–521 (ATLHLSNIPP…HHLRVSFSKS (76 aa)).

As to quaternary structure, interacts with THBS4 (via the acidic amphipathic C-terminus).

In terms of biological role, RNA-binding protein that mediates pre-mRNA alternative splicing regulation. Plays a role in the regulation of cell proliferation, differentiation and migration. Positive regulator of EPO-dependent erythropoiesis. Participates in cell differentiation regulation by repressing tissue-specific exons. Promotes Fas exon 6 skipping. Binds RNA, preferentially to both poly(G) and poly(U). In Mus musculus (Mouse), this protein is Polypyrimidine tract-binding protein 3 (Ptbp3).